Here is a 272-residue protein sequence, read N- to C-terminus: Ribosomal RNA small subunit methyltransferase A (272 aa).

The S-adenosyl-L-methionine site is built by asparagine 18, leucine 20, glycine 45, glutamate 66, aspartate 91, and asparagine 113.

Belongs to the class I-like SAM-binding methyltransferase superfamily. rRNA adenine N(6)-methyltransferase family. RsmA subfamily.

The protein localises to the cytoplasm. The catalysed reaction is adenosine(1518)/adenosine(1519) in 16S rRNA + 4 S-adenosyl-L-methionine = N(6)-dimethyladenosine(1518)/N(6)-dimethyladenosine(1519) in 16S rRNA + 4 S-adenosyl-L-homocysteine + 4 H(+). Its function is as follows. Specifically dimethylates two adjacent adenosines (A1518 and A1519) in the loop of a conserved hairpin near the 3'-end of 16S rRNA in the 30S particle. May play a critical role in biogenesis of 30S subunits. The sequence is that of Ribosomal RNA small subunit methyltransferase A from Photorhabdus laumondii subsp. laumondii (strain DSM 15139 / CIP 105565 / TT01) (Photorhabdus luminescens subsp. laumondii).